The following is a 179-amino-acid chain: ATP-dependent protease subunit HslV (179 aa).

Threonine 5 is an active-site residue. Cysteine 164 and threonine 167 together coordinate Na(+).

This sequence belongs to the peptidase T1B family. HslV subfamily. As to quaternary structure, a double ring-shaped homohexamer of HslV is capped on each side by a ring-shaped HslU homohexamer. The assembly of the HslU/HslV complex is dependent on binding of ATP.

The protein resides in the cytoplasm. It catalyses the reaction ATP-dependent cleavage of peptide bonds with broad specificity.. Its activity is regulated as follows. Allosterically activated by HslU binding. Protease subunit of a proteasome-like degradation complex believed to be a general protein degrading machinery. The protein is ATP-dependent protease subunit HslV of Carboxydothermus hydrogenoformans (strain ATCC BAA-161 / DSM 6008 / Z-2901).